The following is a 444-amino-acid chain: Putative dipeptidase CPC735_015490 (444 aa).

A signal peptide spans 1–34; it reads MSQRTEHNGSWLRNAGSLLSVLACVAVLASPASA. Zn(2+) contacts are provided by His67, Asp69, and Glu178. Cys118 and Cys207 are oxidised to a cystine. His205 serves as a coordination point for substrate. His250 and His271 together coordinate Zn(2+). Substrate-binding residues include Arg282 and Asp342. Asn413 is a glycosylation site (N-linked (GlcNAc...) asparagine).

Belongs to the metallo-dependent hydrolases superfamily. Peptidase M19 family. Zn(2+) serves as cofactor.

It carries out the reaction an L-aminoacyl-L-amino acid + H2O = 2 an L-alpha-amino acid. Its function is as follows. Hydrolyzes a wide range of dipeptides. The chain is Putative dipeptidase CPC735_015490 from Coccidioides posadasii (strain C735) (Valley fever fungus).